The primary structure comprises 322 residues: Phospho-N-acetylmuramoyl-pentapeptide-transferase (322 aa).

10 helical membrane-spanning segments follow: residues 10-30, 51-71, 79-99, 107-127, 146-166, 178-198, 203-223, 227-247, 250-270, and 302-322; these read YTAL…IPML, NGTP…TGLT, MAVG…DDFI, LGLK…YVAF, FVIN…VAIV, LASG…SSIA, VAVL…FNSY, VFMG…FSVL, SVLI…SVLI, and VVFI…IAVF.

Belongs to the glycosyltransferase 4 family. MraY subfamily. Requires Mg(2+) as cofactor.

It localises to the cell membrane. It catalyses the reaction UDP-N-acetyl-alpha-D-muramoyl-L-alanyl-gamma-D-glutamyl-meso-2,6-diaminopimeloyl-D-alanyl-D-alanine + di-trans,octa-cis-undecaprenyl phosphate = di-trans,octa-cis-undecaprenyl diphospho-N-acetyl-alpha-D-muramoyl-L-alanyl-D-glutamyl-meso-2,6-diaminopimeloyl-D-alanyl-D-alanine + UMP. Its pathway is cell wall biogenesis; peptidoglycan biosynthesis. Functionally, catalyzes the initial step of the lipid cycle reactions in the biosynthesis of the cell wall peptidoglycan: transfers peptidoglycan precursor phospho-MurNAc-pentapeptide from UDP-MurNAc-pentapeptide onto the lipid carrier undecaprenyl phosphate, yielding undecaprenyl-pyrophosphoryl-MurNAc-pentapeptide, known as lipid I. In Clostridioides difficile (strain 630) (Peptoclostridium difficile), this protein is Phospho-N-acetylmuramoyl-pentapeptide-transferase.